A 290-amino-acid polypeptide reads, in one-letter code: Nucleotide-binding protein Clos_0574 (290 aa).

8–15 provides a ligand contact to ATP; that stretch reads GLSGAGKS. 59 to 62 serves as a coordination point for GTP; that stretch reads DIRG.

Belongs to the RapZ-like family.

In terms of biological role, displays ATPase and GTPase activities. The protein is Nucleotide-binding protein Clos_0574 of Alkaliphilus oremlandii (strain OhILAs) (Clostridium oremlandii (strain OhILAs)).